Consider the following 190-residue polypeptide: dCTP deaminase (190 aa).

DCTP is bound at residue 113-118 (KSTYAR). Glutamate 139 serves as the catalytic Proton donor/acceptor. DCTP contacts are provided by glutamine 158, tyrosine 172, lysine 181, and glutamine 182.

It belongs to the dCTP deaminase family. In terms of assembly, homotrimer.

It carries out the reaction dCTP + H2O + H(+) = dUTP + NH4(+). It functions in the pathway pyrimidine metabolism; dUMP biosynthesis; dUMP from dCTP (dUTP route): step 1/2. Functionally, catalyzes the deamination of dCTP to dUTP. The protein is dCTP deaminase of Chlamydia trachomatis serovar A (strain ATCC VR-571B / DSM 19440 / HAR-13).